Here is a 1340-residue protein sequence, read N- to C-terminus: Early transcription factor large subunit homolog (1340 aa).

The protein belongs to the asfivirus G1340L family.

The protein localises to the virion. Functionally, putative initation factor. This African swine fever virus (isolate Tick/South Africa/Pretoriuskop Pr4/1996) (ASFV) protein is Early transcription factor large subunit homolog.